Here is a 121-residue protein sequence, read N- to C-terminus: NADH-quinone oxidoreductase subunit 7 (121 aa).

The next 3 membrane-spanning stretches (helical) occupy residues 11–31 (ILVF…AAAV), 65–85 (LVSI…PWAV), and 93–113 (VAFW…AYEW).

Belongs to the complex I subunit 3 family. As to quaternary structure, NDH-1 is composed of at least 14 different subunits, Nqo1 to Nqo14. The complex has a L-shaped structure, with the hydrophobic arm (subunits Nqo7, Nqo8, Nqo10 to Nqo14) embedded in the inner membrane and the hydrophilic peripheral arm (subunits Nqo1 to Nqo6, Nqo9) protruding into the bacterial cytoplasm. The hydrophilic domain contains all the redox centers.

It is found in the cell inner membrane. It carries out the reaction a quinone + NADH + 5 H(+)(in) = a quinol + NAD(+) + 4 H(+)(out). Functionally, NDH-1 shuttles electrons from NADH, via FMN and iron-sulfur (Fe-S) centers, to quinones in the respiratory chain. The immediate electron acceptor for the enzyme in this species is believed to be ubiquinone. Couples the redox reaction to proton translocation (for every two electrons transferred, four hydrogen ions are translocated across the cytoplasmic membrane), and thus conserves the redox energy in a proton gradient. This chain is NADH-quinone oxidoreductase subunit 7 (nqo7), found in Paracoccus denitrificans.